Reading from the N-terminus, the 603-residue chain is Elongation factor 4 (603 aa).

A tr-type G domain is found at 2 to 184 (NHIRNFSIIA…AVVARMPPPR (183 aa)). Residues 14–19 (DHGKST) and 131–134 (NKMD) contribute to the GTP site.

This sequence belongs to the TRAFAC class translation factor GTPase superfamily. Classic translation factor GTPase family. LepA subfamily.

Its subcellular location is the cell inner membrane. It catalyses the reaction GTP + H2O = GDP + phosphate + H(+). Functionally, required for accurate and efficient protein synthesis under certain stress conditions. May act as a fidelity factor of the translation reaction, by catalyzing a one-codon backward translocation of tRNAs on improperly translocated ribosomes. Back-translocation proceeds from a post-translocation (POST) complex to a pre-translocation (PRE) complex, thus giving elongation factor G a second chance to translocate the tRNAs correctly. Binds to ribosomes in a GTP-dependent manner. The polypeptide is Elongation factor 4 (Albidiferax ferrireducens (strain ATCC BAA-621 / DSM 15236 / T118) (Rhodoferax ferrireducens)).